The primary structure comprises 285 residues: NAD kinase (285 aa).

Asp66 acts as the Proton acceptor in catalysis. Residues 66 to 67 (DG), 137 to 138 (ND), Arg148, Arg165, Asp167, and 178 to 183 (TAYSLS) contribute to the NAD(+) site.

This sequence belongs to the NAD kinase family. Requires a divalent metal cation as cofactor.

Its subcellular location is the cytoplasm. The enzyme catalyses NAD(+) + ATP = ADP + NADP(+) + H(+). Functionally, involved in the regulation of the intracellular balance of NAD and NADP, and is a key enzyme in the biosynthesis of NADP. Catalyzes specifically the phosphorylation on 2'-hydroxyl of the adenosine moiety of NAD to yield NADP. This Prosthecochloris aestuarii (strain DSM 271 / SK 413) protein is NAD kinase.